The chain runs to 611 residues: Probable methyltransferase PMT1 (611 aa).

The Cytoplasmic segment spans residues 1-11 (MRGRSEGGKKK). A helical; Signal-anchor for type II membrane protein transmembrane segment spans residues 12–32 (PVIVLLCVASVVLVFVYLFFG). Topologically, residues 33 to 611 (SSNHKAIEYG…LTSESLRDLE (579 aa)) are lumenal. An N-linked (GlcNAc...) asparagine glycan is attached at N345.

The protein belongs to the methyltransferase superfamily.

The protein localises to the golgi apparatus membrane. The chain is Probable methyltransferase PMT1 from Arabidopsis thaliana (Mouse-ear cress).